The sequence spans 389 residues: Chalcone synthase 1A (389 aa).

The active site involves Cys-164.

This sequence belongs to the thiolase-like superfamily. Chalcone/stilbene synthases family.

The catalysed reaction is (E)-4-coumaroyl-CoA + 3 malonyl-CoA + 3 H(+) = 2',4,4',6'-tetrahydroxychalcone + 3 CO2 + 4 CoA. It functions in the pathway secondary metabolite biosynthesis; flavonoid biosynthesis. Its function is as follows. The primary product of this enzyme is 4,2',4',6'-tetrahydroxychalcone (also termed naringenin-chalcone or chalcone) which can under specific conditions spontaneously isomerize into naringenin. This is Chalcone synthase 1A (CHS1A) from Solanum tuberosum (Potato).